We begin with the raw amino-acid sequence, 184 residues long: UPF0301 protein Sden_2674 (184 aa).

This sequence belongs to the UPF0301 (AlgH) family.

In Shewanella denitrificans (strain OS217 / ATCC BAA-1090 / DSM 15013), this protein is UPF0301 protein Sden_2674.